Here is a 637-residue protein sequence, read N- to C-terminus: tRNA uridine 5-carboxymethylaminomethyl modification enzyme MnmG (637 aa).

FAD is bound by residues 15 to 20 (GAGHAG), Val-127, and Ser-182. An NAD(+)-binding site is contributed by 274–288 (GPRYCPSIEDKVVRF). An FAD-binding site is contributed by Gln-371.

The protein belongs to the MnmG family. In terms of assembly, homodimer. Heterotetramer of two MnmE and two MnmG subunits. The cofactor is FAD.

It is found in the cytoplasm. In terms of biological role, NAD-binding protein involved in the addition of a carboxymethylaminomethyl (cmnm) group at the wobble position (U34) of certain tRNAs, forming tRNA-cmnm(5)s(2)U34. This chain is tRNA uridine 5-carboxymethylaminomethyl modification enzyme MnmG, found in Heliobacterium modesticaldum (strain ATCC 51547 / Ice1).